Here is a 355-residue protein sequence, read N- to C-terminus: Probable nitronate monooxygenase (355 aa).

Residues Asn-71, Gln-175, Gly-180, Gly-218, and 237-240 (QMGT) contribute to the FMN site.

The protein belongs to the nitronate monooxygenase family. NMO class I subfamily. FMN serves as cofactor.

It catalyses the reaction 3 propionate 3-nitronate + 3 O2 + H2O = 3 3-oxopropanoate + 2 nitrate + nitrite + H2O2 + 3 H(+). In terms of biological role, nitronate monooxygenase that uses molecular oxygen to catalyze the oxidative denitrification of alkyl nitronates. Acts on propionate 3-nitronate (P3N), the presumed physiological substrate. Probably functions in the detoxification of P3N, a metabolic poison produced by plants and fungi as a defense mechanism. The polypeptide is Probable nitronate monooxygenase (Staphylococcus aureus (strain MRSA252)).